A 124-amino-acid chain; its full sequence is Large ribosomal subunit protein bL12 (124 aa).

Belongs to the bacterial ribosomal protein bL12 family. In terms of assembly, homodimer. Part of the ribosomal stalk of the 50S ribosomal subunit. Forms a multimeric L10(L12)X complex, where L10 forms an elongated spine to which 2 to 4 L12 dimers bind in a sequential fashion. Binds GTP-bound translation factors.

Functionally, forms part of the ribosomal stalk which helps the ribosome interact with GTP-bound translation factors. Is thus essential for accurate translation. The sequence is that of Large ribosomal subunit protein bL12 from Wolinella succinogenes (strain ATCC 29543 / DSM 1740 / CCUG 13145 / JCM 31913 / LMG 7466 / NCTC 11488 / FDC 602W) (Vibrio succinogenes).